The chain runs to 353 residues: BLOC-1-related complex subunit 6 (353 aa).

The disordered stretch occupies residues 23–194 (AIFGDGPGQT…SGAGGGRRAT (172 aa)). A compositionally biased stretch (basic and acidic residues) spans 102 to 126 (FDLHGSSRRKDPEPPEAKPESERVC). Residues S130 and S166 each carry the phosphoserine modification. Over residues 172–191 (GACGGPASSGGAESGAGGGR) the composition is skewed to gly residues. T194 carries the phosphothreonine modification. A Phosphoserine modification is found at S197. Residues 225–253 (LSGAPQPPPPAPTRPCSAPTPTPAIPPID) are disordered. Positions 229 to 253 (PQPPPPAPTRPCSAPTPTPAIPPID) are enriched in pro residues.

This sequence belongs to the BORCS6 family. Component of the BLOC-one-related complex (BORC) which is composed of BLOC1S1, BLOC1S2, BORCS5, BORCS6, BORCS7, BORCS8, KXD1 and SNAPIN.

It localises to the lysosome membrane. In terms of biological role, as part of the BORC complex may play a role in lysosomes movement and localization at the cell periphery. Associated with the cytosolic face of lysosomes, the BORC complex may recruit ARL8B and couple lysosomes to microtubule plus-end-directed kinesin motor. The polypeptide is BLOC-1-related complex subunit 6 (Bos taurus (Bovine)).